The following is a 259-amino-acid chain: Leucine-rich repeat-containing protein 3B (259 aa).

The N-terminal stretch at 1 to 33 (MNLVDLWLSRSLSMCLLLQSFVLMILCFHSASM) is a signal peptide. Positions 34–64 (CPKGCLCSSSGGLNVTCSNANLKEIPRDLPP) constitute an LRRNT domain. N-linked (GlcNAc...) asparagine glycosylation occurs at Asn-47. 3 LRR repeats span residues 65–86 (ETVL…IFKD), 89–110 (QLRV…AFKG), and 114–135 (TLQT…AFNN). A glycan (N-linked (GlcNAc...) asparagine) is linked at Asn-94. One can recognise an LRRCT domain in the interval 145–197 (NPWHCDCTLQQVLRSMASNHETAHNVICKTSVLDEHAGRPFLNAANDADLCNL). The helical transmembrane segment at 205-225 (AMLVTMFGWFTMVISYVVYYV) threads the bilayer.

Belongs to the LRRC3 family.

It is found in the membrane. In Mus musculus (Mouse), this protein is Leucine-rich repeat-containing protein 3B (Lrrc3b).